A 740-amino-acid chain; its full sequence is Glycerol dehydrogenase large subunit (740 aa).

A signal peptide spans 1 to 29 (MRRPYLLATAAGLALACSPLIAHAQFAPA). 2 disordered regions span residues 28 to 105 (PAGA…GDWV) and 442 to 468 (LPVE…PWSV). Over residues 34–43 (EPSSSVPGPG) the composition is skewed to low complexity. Over residues 46 to 58 (SEPTENSPKSQSY) the composition is skewed to polar residues.

Belongs to the bacterial PQQ dehydrogenase family. The cofactor is pyrroloquinoline quinone.

It localises to the secreted. It catalyses the reaction glycerol + A = dihydroxyacetone + AH2. In terms of biological role, catalyzes the oxidation of glycerol to glycerone. Also acts, more slowly, on a number of other polyols including D-sorbitol, D-arabinitol, D-mannitol, meso-erythritol, adonitol and propylene glycol. This Gluconobacter thailandicus protein is Glycerol dehydrogenase large subunit (sldA).